The following is a 199-amino-acid chain: Peroxiredoxin-2 (199 aa).

One can recognise a Thioredoxin domain in the interval 7 to 165 (AHVGKPAPEF…ALRLVQAFQY (159 aa)). Cys-52 (cysteine sulfenic acid (-SOH) intermediate) is an active-site residue. Phosphoserine is present on Ser-113. Thr-183 carries the post-translational modification Phosphothreonine. Lys-197 is subject to N6-acetyllysine.

Belongs to the peroxiredoxin family. AhpC/Prx1 subfamily. In terms of assembly, homodimer; disulfide-linked, upon oxidation. 5 homodimers assemble to form a ring-like decamer. Interacts with TIPIN. In terms of processing, the enzyme can be inactivated by further oxidation of the cysteine sulfenic acid (C(P)-SOH) to sulphinic acid (C(P)-SO2H) instead of its condensation to a disulfide bond. It can be reactivated by forming a transient disulfide bond with sulfiredoxin SRXN1, which reduces the cysteine sulfinic acid in an ATP- and Mg-dependent manner. Acetylation increases resistance to transition to high molecular-mass complexes. Deacetylated by HDAC6 which decreases reducing activity.

The protein localises to the cytoplasm. It carries out the reaction a hydroperoxide + [thioredoxin]-dithiol = an alcohol + [thioredoxin]-disulfide + H2O. Its function is as follows. Thiol-specific peroxidase that catalyzes the reduction of hydrogen peroxide and organic hydroperoxides to water and alcohols, respectively. Plays a role in cell protection against oxidative stress by detoxifying peroxides and as sensor of hydrogen peroxide-mediated signaling events. Might participate in the signaling cascades of growth factors and tumor necrosis factor-alpha by regulating the intracellular concentrations of H(2)O(2). The polypeptide is Peroxiredoxin-2 (PRDX2) (Bos taurus (Bovine)).